Consider the following 730-residue polypeptide: Ribosomal RNA large subunit methyltransferase K/L (730 aa).

Positions 46–157 (TAYRLCVWSR…RGEAILSLDL (112 aa)) constitute a THUMP domain. The segment at 395–418 (ERREAQPEGTEVRQQAPQASEPAR) is disordered.

The protein belongs to the methyltransferase superfamily. RlmKL family.

The protein localises to the cytoplasm. The enzyme catalyses guanosine(2445) in 23S rRNA + S-adenosyl-L-methionine = N(2)-methylguanosine(2445) in 23S rRNA + S-adenosyl-L-homocysteine + H(+). It carries out the reaction guanosine(2069) in 23S rRNA + S-adenosyl-L-methionine = N(2)-methylguanosine(2069) in 23S rRNA + S-adenosyl-L-homocysteine + H(+). Its function is as follows. Specifically methylates the guanine in position 2445 (m2G2445) and the guanine in position 2069 (m7G2069) of 23S rRNA. The sequence is that of Ribosomal RNA large subunit methyltransferase K/L from Pseudomonas putida (strain GB-1).